The chain runs to 434 residues: Chaperone SurA (434 aa).

The signal sequence occupies residues 1-22 (MKPSKHLIFALFALAISQPTMA). 2 PpiC domains span residues 173–274 (DVEY…KIMD) and 283–383 (IEEV…QLEE).

It localises to the periplasm. It carries out the reaction [protein]-peptidylproline (omega=180) = [protein]-peptidylproline (omega=0). Functionally, chaperone involved in the correct folding and assembly of outer membrane proteins. Recognizes specific patterns of aromatic residues and the orientation of their side chains, which are found more frequently in integral outer membrane proteins. May act in both early periplasmic and late outer membrane-associated steps of protein maturation. This Shewanella sp. (strain MR-4) protein is Chaperone SurA.